The sequence spans 227 residues: NADH-quinone oxidoreductase subunit C (227 aa).

The protein belongs to the complex I 30 kDa subunit family. In terms of assembly, NDH-1 is composed of 14 different subunits. Subunits NuoB, C, D, E, F, and G constitute the peripheral sector of the complex.

It localises to the cell inner membrane. The catalysed reaction is a quinone + NADH + 5 H(+)(in) = a quinol + NAD(+) + 4 H(+)(out). NDH-1 shuttles electrons from NADH, via FMN and iron-sulfur (Fe-S) centers, to quinones in the respiratory chain. The immediate electron acceptor for the enzyme in this species is believed to be ubiquinone. Couples the redox reaction to proton translocation (for every two electrons transferred, four hydrogen ions are translocated across the cytoplasmic membrane), and thus conserves the redox energy in a proton gradient. This Legionella pneumophila subsp. pneumophila (strain Philadelphia 1 / ATCC 33152 / DSM 7513) protein is NADH-quinone oxidoreductase subunit C.